The chain runs to 296 residues: Probable 2-(5''-triphosphoribosyl)-3'-dephosphocoenzyme-A synthase (296 aa).

It belongs to the CitG/MdcB family.

The catalysed reaction is 3'-dephospho-CoA + ATP = 2'-(5''-triphospho-alpha-D-ribosyl)-3'-dephospho-CoA + adenine. The polypeptide is Probable 2-(5''-triphosphoribosyl)-3'-dephosphocoenzyme-A synthase (Streptococcus mutans serotype c (strain ATCC 700610 / UA159)).